Consider the following 277-residue polypeptide: Inositol monophosphatase 1 (277 aa).

4 residues coordinate Mg(2+): Glu-70, Asp-90, Ile-92, and Asp-93. Substrate is bound at residue Glu-70. Residue Ile-92 to Thr-95 coordinates substrate. Thr-168 bears the Phosphothreonine mark. Substrate-binding positions include Gly-194 to Ala-196, Glu-213, and Asp-220. Mg(2+) is bound at residue Asp-220.

The protein belongs to the inositol monophosphatase superfamily. Homodimer. The cofactor is Mg(2+).

It is found in the cytoplasm. It catalyses the reaction a myo-inositol phosphate + H2O = myo-inositol + phosphate. The catalysed reaction is 1D-myo-inositol 1-phosphate + H2O = myo-inositol + phosphate. It carries out the reaction 1D-myo-inositol 2-phosphate + H2O = myo-inositol + phosphate. The enzyme catalyses 1D-myo-inositol 3-phosphate + H2O = myo-inositol + phosphate. It catalyses the reaction 1D-myo-inositol 4-phosphate + H2O = myo-inositol + phosphate. The catalysed reaction is 1D-myo-inositol 5-phosphate + H2O = myo-inositol + phosphate. It carries out the reaction 1D-myo-inositol 6-phosphate + H2O = myo-inositol + phosphate. The enzyme catalyses scyllo-inositol 1-phosphate + H2O = scyllo-inositol + phosphate. It catalyses the reaction alpha-D-galactose 1-phosphate + H2O = D-galactose + phosphate. The catalysed reaction is alpha-D-glucose 1-phosphate + H2O = D-glucose + phosphate. It carries out the reaction D-glucose 6-phosphate + H2O = D-glucose + phosphate. The enzyme catalyses beta-D-fructose 1-phosphate + H2O = D-fructose + phosphate. It catalyses the reaction glycerol 2-phosphate + H2O = glycerol + phosphate. The catalysed reaction is adenosine 2'-phosphate + H2O = adenosine + phosphate. It functions in the pathway polyol metabolism; myo-inositol biosynthesis; myo-inositol from D-glucose 6-phosphate: step 2/2. Inhibited by Li(+), Ca(2+) and Mn(2+), but also by Mg(2+) at concentrations above 3 mM. In terms of biological role, phosphatase involved in the dephosphorylation of myo-inositol monophosphate to generate myo-inositol. Is also able to dephosphorylate scyllo-inositol-phosphate, myo-inositol 1,4-diphosphate, scyllo-inositol-1,3-diphosphate and scyllo-inositol-1,4-diphosphate. Also dephosphorylates in vitro other sugar-phosphates including D-galactose-1-phosphate, glucose-1-phosphate, glucose-6-phosphate, fructose-1-phosphate, beta-glycerophosphate and 2'-AMP. Responsible for the provision of inositol required for synthesis of phosphatidylinositol and polyphosphoinositides, and involved in maintaining normal brain function. Has been implicated as the pharmacological target for lithium Li(+) action in brain. The protein is Inositol monophosphatase 1 (IMPA1) of Sus scrofa (Pig).